We begin with the raw amino-acid sequence, 525 residues long: Protein translocase subunit SecD (525 aa).

A run of 6 helical transmembrane segments spans residues 9 to 29 (LYLV…SLLG), 368 to 388 (VLIG…GFGM), 392 to 412 (LAVV…QATL), 415 to 435 (PGIA…VLIF), 460 to 480 (FSTI…LYQF), and 487 to 507 (GFAV…IFVT).

Belongs to the SecD/SecF family. SecD subfamily. Forms a complex with SecF. Part of the essential Sec protein translocation apparatus which comprises SecA, SecYEG and auxiliary proteins SecDF-YajC and YidC.

The protein resides in the cell inner membrane. Its function is as follows. Part of the Sec protein translocase complex. Interacts with the SecYEG preprotein conducting channel. SecDF uses the proton motive force (PMF) to complete protein translocation after the ATP-dependent function of SecA. The protein is Protein translocase subunit SecD of Magnetococcus marinus (strain ATCC BAA-1437 / JCM 17883 / MC-1).